The chain runs to 495 residues: MNKKRSPKTVLAAGPSSKRGDLIELAVTALDEDGNGIGTHDGTNVHVIGALPDERVRARLTHVGKRHLHAEAVEVLTPSRARLAQPSCKRAGSCDGCPLIVMHYPDQLNWKRTFTERQIRRYQTLGAAEVLATLPSPNQLHYRNSAKLVVSGTFRRPVIGIYRRNSHQVMDIGTCPLHHPLINRVVTAVKEGIAKCKVQVYNPRTGSGLLRYLVVRISERTGTAMAVFVTVERNYNEIHHLAKHLQQSVPQVEVVVQNVNSSEGNVILGQRDYFLTRQHALTEELGGIRFTISPRSFFQVNSGGARIIYETVRQWSSLTGKESVVDLYCGIGGIALFLAGTAREVHGIEVVEAAVNDAESNARLNRIHNCSFEAGDAAELIEELVEEGERLDLVVLNPPRKGCDAGVLNKVAAAGPARIVYVSCAPATLARDLDILAGLGYATLRVQPVDMFPQTPHVENIALLVKKLPRNDRLESPAKERSRPRASHKAKGGAV.

A TRAM domain is found at 16–74 (SSKRGDLIELAVTALDEDGNGIGTHDGTNVHVIGALPDERVRARLTHVGKRHLHAEAVE). 4 residues coordinate [4Fe-4S] cluster: C88, C94, C97, and C175. Q299, Y328, E349, and N397 together coordinate S-adenosyl-L-methionine. C424 serves as the catalytic Nucleophile. Basic and acidic residues predominate over residues 472-483 (DRLESPAKERSR). The interval 472 to 495 (DRLESPAKERSRPRASHKAKGGAV) is disordered. The segment covering 484 to 495 (PRASHKAKGGAV) has biased composition (basic residues).

It belongs to the class I-like SAM-binding methyltransferase superfamily. RNA M5U methyltransferase family.

This is an uncharacterized protein from Geobacter sulfurreducens (strain ATCC 51573 / DSM 12127 / PCA).